The chain runs to 328 residues: Endochitinase (328 aa).

The first 27 residues, 1–27 (MKKNRMMMMIWSVGVVWMLLLVGGSYG), serve as a signal peptide directing secretion. Positions 28–68 (EQCGRQAGGALCPGGNCCSQFGWCGSTTDYCGPGCQSQCGG) constitute a Chitin-binding type-1 domain. 7 disulfide bridges follow: cysteine 30/cysteine 45, cysteine 39/cysteine 51, cysteine 44/cysteine 58, cysteine 62/cysteine 66, cysteine 97/cysteine 159, cysteine 170/cysteine 178, and cysteine 277/cysteine 309. Glutamate 141 acts as the Proton donor in catalysis. Residues 318 to 328 (SLLLSDLVTSQ) constitute a propeptide, removed in mature form.

Belongs to the glycosyl hydrolase 19 family. Chitinase class I subfamily.

It is found in the vacuole. The catalysed reaction is Random endo-hydrolysis of N-acetyl-beta-D-glucosaminide (1-&gt;4)-beta-linkages in chitin and chitodextrins.. In terms of biological role, defense against chitin-containing fungal pathogens. The protein is Endochitinase of Phaseolus vulgaris (Kidney bean).